The following is a 226-amino-acid chain: NADH-ubiquinone oxidoreductase 19.3 kDa subunit, mitochondrial (226 aa).

The segment at 40–68 (ATGAVAPAGAQHGIARRERREVPLPSQEG) is disordered. [4Fe-4S] cluster-binding residues include C101, C102, C166, and C196.

This sequence belongs to the complex I 20 kDa subunit family. In terms of assembly, complex I is composed of about 40 different subunits. This is a component of the iron-sulfur (IP) fragment of the enzyme. Requires [4Fe-4S] cluster as cofactor.

It localises to the mitochondrion. The catalysed reaction is a ubiquinone + NADH + 5 H(+)(in) = a ubiquinol + NAD(+) + 4 H(+)(out). Its function is as follows. Core subunit of the mitochondrial membrane respiratory chain NADH dehydrogenase (Complex I) that is believed to belong to the minimal assembly required for catalysis. Complex I functions in the transfer of electrons from NADH to the respiratory chain. The immediate electron acceptor for the enzyme is believed to be ubiquinone. This Neurospora crassa (strain ATCC 24698 / 74-OR23-1A / CBS 708.71 / DSM 1257 / FGSC 987) protein is NADH-ubiquinone oxidoreductase 19.3 kDa subunit, mitochondrial.